The following is a 495-amino-acid chain: Protein nucleotidyltransferase YdiU (495 aa).

Residues Gly92, Gly94, Arg95, Lys114, Asp126, Gly127, Arg177, and Arg184 each contribute to the ATP site. The Proton acceptor role is filled by Asp261. Asn262 and Asp271 together coordinate Mg(2+). ATP is bound at residue Asp271.

The protein belongs to the SELO family. Mg(2+) serves as cofactor. Requires Mn(2+) as cofactor.

It catalyses the reaction L-seryl-[protein] + ATP = 3-O-(5'-adenylyl)-L-seryl-[protein] + diphosphate. The catalysed reaction is L-threonyl-[protein] + ATP = 3-O-(5'-adenylyl)-L-threonyl-[protein] + diphosphate. The enzyme catalyses L-tyrosyl-[protein] + ATP = O-(5'-adenylyl)-L-tyrosyl-[protein] + diphosphate. It carries out the reaction L-histidyl-[protein] + UTP = N(tele)-(5'-uridylyl)-L-histidyl-[protein] + diphosphate. It catalyses the reaction L-seryl-[protein] + UTP = O-(5'-uridylyl)-L-seryl-[protein] + diphosphate. The catalysed reaction is L-tyrosyl-[protein] + UTP = O-(5'-uridylyl)-L-tyrosyl-[protein] + diphosphate. In terms of biological role, nucleotidyltransferase involved in the post-translational modification of proteins. It can catalyze the addition of adenosine monophosphate (AMP) or uridine monophosphate (UMP) to a protein, resulting in modifications known as AMPylation and UMPylation. This chain is Protein nucleotidyltransferase YdiU, found in Bordetella bronchiseptica (strain ATCC BAA-588 / NCTC 13252 / RB50) (Alcaligenes bronchisepticus).